Here is a 250-residue protein sequence, read N- to C-terminus: 2,3-bisphosphoglycerate-dependent phosphoglycerate mutase (250 aa).

Residues 10 to 17 (RHGESQWN), 23 to 24 (TG), R62, 89 to 92 (ERHY), K100, 116 to 117 (RR), and 185 to 186 (GN) each bind substrate. H11 acts as the Tele-phosphohistidine intermediate in catalysis. E89 acts as the Proton donor/acceptor in catalysis.

The protein belongs to the phosphoglycerate mutase family. BPG-dependent PGAM subfamily. In terms of assembly, homodimer.

The enzyme catalyses (2R)-2-phosphoglycerate = (2R)-3-phosphoglycerate. It functions in the pathway carbohydrate degradation; glycolysis; pyruvate from D-glyceraldehyde 3-phosphate: step 3/5. Catalyzes the interconversion of 2-phosphoglycerate and 3-phosphoglycerate. The protein is 2,3-bisphosphoglycerate-dependent phosphoglycerate mutase of Shigella dysenteriae serotype 1 (strain Sd197).